The chain runs to 846 residues: Interleukin cytokine receptor-related protein 1 (846 aa).

An N-terminal signal peptide occupies residues 1 to 25; it reads MFLHSPALLIWLFLFCLAGPQAVRT. Topologically, residues 26–418 are extracellular; sequence EPYNSTSSSS…KEDTTWTWHT (393 aa). 6 N-linked (GlcNAc...) asparagine glycosylation sites follow: asparagine 29, asparagine 79, asparagine 186, asparagine 214, asparagine 339, and asparagine 395. Residues 388–409 form a disordered region; sequence EKPPATSNQTEESDGKAEKDKK. Over residues 400 to 409 the composition is skewed to basic and acidic residues; that stretch reads SDGKAEKDKK. A helical membrane pass occupies residues 419-439; it reads YAITGGAIIAILFILSVCAGL. Topologically, residues 440-846 are cytoplasmic; it reads KCYKKFNNKK…AFHDEVIGIH (407 aa). The region spanning 476 to 618 is the SEFIR domain; the sequence is SISVLIVYSH…IPNSLMTMTT (143 aa). Residues 737 to 771 are disordered; that stretch reads GPIHVEPTEPEVLEPAEEPMEEAEEDEEDEDDVDS. The segment covering 744-771 has biased composition (acidic residues); the sequence is TEPEVLEPAEEPMEEAEEDEEDEDDVDS.

As to quaternary structure, component of a heterodimeric receptor complex composed of ilcr-1 and ilcr-2. The receptor complex interacts with actl-1 and ilc-17.1 with the interaction being mediated by ilcr-2. In terms of tissue distribution, expressed in most neurons.

It is found in the cell membrane. Forms a receptor complex together with receptor ilcr-2, which upon activation acts as a modulator of neuronal activity. Binding of the ligand ilc-17.1 to the ilcr-1/2 receptor complex triggers a signaling cascade that activates the downstream signaling components actl-1, pik-1 and nfki-1, and results in increased neuronal activity in RMG interneurons in response to input from oxygen-sensing neurons. This leads to increased animal movement and promotes aggregation behavior. The sequence is that of Interleukin cytokine receptor-related protein 1 from Caenorhabditis elegans.